Here is a 420-residue protein sequence, read N- to C-terminus: Pectate lyase (420 aa).

The signal sequence occupies residues 1-21 (MKKVMLATALFLGLTPAGANA). A disordered region spans residues 117–139 (TWGKKEPSGTQEEARARSQKNQK). The segment covering 119-132 (GKKEPSGTQEEARA) has biased composition (basic and acidic residues). Residues Asp-205, Asp-244, and Asp-248 each contribute to the Ca(2+) site. The active site involves Arg-300.

This sequence belongs to the polysaccharide lyase 1 family. As to quaternary structure, monomer. The cofactor is Ca(2+).

It is found in the secreted. The enzyme catalyses Eliminative cleavage of (1-&gt;4)-alpha-D-galacturonan to give oligosaccharides with 4-deoxy-alpha-D-galact-4-enuronosyl groups at their non-reducing ends.. It functions in the pathway glycan metabolism; pectin degradation; 2-dehydro-3-deoxy-D-gluconate from pectin: step 2/5. Functionally, produces unsaturated products from polygalacturonate. The polypeptide is Pectate lyase (pel) (Bacillus subtilis (strain 168)).